Here is a 325-residue protein sequence, read N- to C-terminus: MLLAPGDVIKRSSEELKQRQIQINLVDWAESEGGKEDKTEPKEESKAEGSKDGEGTQSESGQKEEGGKETKDADVDRRIHTAVGSGSSTKGLGERANENADRGDGKVGGGGGDADAGVGATGTNGRRWVVLTEEIARAIESKYGTKIDVYRDEVPAQIIEVERSLQKELGISREGVAEQTERLRDLRRKEKNGTHAKAVERGGRKQRKKTHGDAQREGVEEEKTSEEPARIGITIEGVMSQKKLLSMIGGVERKMAPIGARESAVMLVSNSIKDVMRATAYFTAPTGDPHWKEVAREASKKKNILAYTSTGGDAKTEFLHLIDHL.

Disordered regions lie at residues 1–122 (MLLA…GATG) and 185–230 (DLRR…EPAR). Basic and acidic residues-rich tracts occupy residues 8–18 (VIKRSSEELKQ), 32–54 (EGGK…KDGE), 61–79 (GQKE…DRRI), and 92–105 (LGER…RGDG). Position 106 (K106) interacts with ATP. The span at 106–122 (KVGGGGGDADAGVGATG) shows a compositional bias: gly residues. 2 stretches are compositionally biased toward basic and acidic residues: residues 185–203 (DLRR…ERGG) and 211–229 (HGDA…EEPA).

Belongs to the orbivirus VP6 family. In terms of assembly, homohexamer.

It localises to the virion. The catalysed reaction is ATP + H2O = ADP + phosphate + H(+). ATP dependent RNA helicase essential for RNA packaging and viral transcription. Possesses ss- and dsRNA-binding capacity. This is Helicase VP6-A (Segment-9) from Bluetongue virus 17 (isolate USA) (BTV 17).